Reading from the N-terminus, the 266-residue chain is MATVESGPDALVERRGHTLIVTMNRPAARNALSTEMMRIMVQAWDRVDNDPDIRCCILTGAGGYFCAGMDLKAATQKPPGDSFKDGSYGPSRIDALLKGRRLTKPLIAAVEGPAIAGGTEILQGTDIRVAGESAKFGISEAKWSLYPMGGSAVRLVRQIPYTLACDLLLTGRHITAAEAKEMGLIGHVVPDGQALTKALELADAISANGPLAVQAILRSIRETECMPENEAFKIDTQIGIKVFLSDDAKEGPRAFAEKRAPNFQNR.

E120 is a catalytic residue. K135 bears the N6-succinyllysine mark. Residue E140 is part of the active site. K142 carries the N6-succinyllysine modification.

This sequence belongs to the enoyl-CoA hydratase/isomerase family. Homotrimer; substrate probably binds in elongated tunnels between the subunits. Post-translationally, succinylated in vitro at pH 8.1, succinylation reduces specific activity of the enzyme 5.5-fold; succinyl-CoA is a downstream by-product of cholesterol degradation. Can be de-succinylated in vitro by NAD-dependent protein deacylase (AC P9WGG3). Succinylation may be a negative feedback regulator of cholesterol metabolism.

The catalysed reaction is (22E)-3-oxochola-4,22-dien-24-oyl-CoA + H2O = (22R)-hydroxy-3-oxo-chol-4-ene-24-oyl-CoA. It functions in the pathway steroid metabolism; cholesterol degradation. Degradation of the cholesterol side chain involves 3 multistep beta-oxidation cycles, this may be involved in the second cycle. Hydrates 3-OCDO-CoA ((22E)-3-oxo-chol-4,22-dien-24-oyl-CoA) to make (22R)-HOCO-CoA (3-oxo-chol-4-ene-(22R)-hydroxy-24-oyl-CoA). Also acts on octenoyl-CoA. Not active on (E)-3-OCDS-CoA ((E)-3-oxocholest-4,24-dien-26-oyl-CoA) or 3-OPDC-CoA (3-oxo-4,17-pregnadiene-20-carboxyl-CoA). Hydrates the same substrate as ChsH3, but the 2 enzymes make different stereoisomers of the product. The chain is Enoyl-CoA hydratase EchA19 from Mycobacterium tuberculosis (strain ATCC 25618 / H37Rv).